The primary structure comprises 461 residues: MFVPSNIGWLVLSCGLFVAYWVLLAIYRLHFHPLSRYRGPRVAAVSNSWYEWYWNYYLNGQMIFEIQRLHKQYGPVVRIGVNDLSIDDPEVYQAMTKVSSGFTKDPHFYRCISFPGTSIGETDPAQSRIRRKVLTPALSGTRVQELAPAILVKVERLLRRVDLCAQSAKTICITSACKALTMDIISKIVLGREIGCIEEPDFRNSFIENLNAAFETGWIATAFPRLATLALWMASMSDFSSYLEVFDPHSAVYVAREDVNVPSAIAAHADRSAVIDMLMDPLTVKGHTVPSLEQLNDEAVILLTAGNDTTSNSMIFGLYQICNNMSVYKTLFQELQGHFPSVDQQITYEEAKQLPYLTATIKEILRLGTPLPGRLPRLIPSSGFQLYGQDLPPKTSIHTSPYLXNRHPSIWDNPNDFNPDRWLRKNSRDLDKYLATFNRGARQCLGKEWVHSYQIAGLWQD.

A helical transmembrane segment spans residues 7-27 (IGWLVLSCGLFVAYWVLLAIY). N-linked (GlcNAc...) asparagine glycans are attached at residues Asn-307 and Asn-324. Cys-444 provides a ligand contact to heme.

This sequence belongs to the cytochrome P450 family. Requires heme as cofactor.

The protein resides in the membrane. Its pathway is phytotoxin biosynthesis. Cytochrome P450 monooxygenase; part of the gene cluster that mediates the biosynthesis of the phytotoxin solanapyrone, a causal agent of early blight disease of potato and tomato. The prosolanapyrone synthase sol1 is a polyketide synthase that produces the octaketide desmethylprosolanapyrone I via sequential condensations of 7 malonyl-CoA units with one acetyl-CoA unit, and one methylation step. The octaketide backbone is further methylated by the sol2 O-methyltransferase to yield prosolanapyrone I. Prosolanapyrone I is hydroxylated to prosolanapyrone II by the cytochrome P450 monooxygenase sol6. The solanapyrone synthase sol5 then catalyzes the oxidation of prosolanapyrone II and the subsequent Diels Alder cycloisomerization of the product prosolanapyrone III to solanapyrones A and D. Solanapyrones A and D are then converted into solanapyrones B and E, respectively, by the sol3 dehydrogenase. The chain is Cytochrome P450 monooxygenase sol6 (sol6) from Alternaria solani.